The sequence spans 204 residues: Synaptosomal-associated protein 25-A (204 aa).

The segment covering 1–11 (MAEDADMRNEL) has biased composition (basic and acidic residues). The disordered stretch occupies residues 1–25 (MAEDADMRNELSDMQQRADQLADES). 2 consecutive t-SNARE coiled-coil homology domains span residues 19-81 (DQLA…LNDL) and 138-200 (DARE…ATKM).

It belongs to the SNAP-25 family.

The protein localises to the synapse. It is found in the synaptosome. It localises to the cell membrane. Functionally, may play an important role in the synaptic function of specific neuronal systems. Associates with proteins involved in vesicle docking and membrane fusion. The protein is Synaptosomal-associated protein 25-A (snap25a) of Carassius auratus (Goldfish).